The following is a 100-amino-acid chain: NADH-quinone oxidoreductase subunit K (100 aa).

The next 3 membrane-spanning stretches (helical) occupy residues 2-22, 29-49, and 60-80; these read IGLT…LVGI, IMLF…LAAI, and IIAF…LGLL.

Belongs to the complex I subunit 4L family. As to quaternary structure, NDH-1 is composed of 14 different subunits. Subunits NuoA, H, J, K, L, M, N constitute the membrane sector of the complex.

It localises to the cell inner membrane. It catalyses the reaction a quinone + NADH + 5 H(+)(in) = a quinol + NAD(+) + 4 H(+)(out). In terms of biological role, NDH-1 shuttles electrons from NADH, via FMN and iron-sulfur (Fe-S) centers, to quinones in the respiratory chain. The immediate electron acceptor for the enzyme in this species is believed to be ubiquinone. Couples the redox reaction to proton translocation (for every two electrons transferred, four hydrogen ions are translocated across the cytoplasmic membrane), and thus conserves the redox energy in a proton gradient. In Campylobacter concisus (strain 13826), this protein is NADH-quinone oxidoreductase subunit K.